The sequence spans 22 residues: Melittin-related peptide FQ-22-1 (22 aa).

Glutamine 22 bears the Glutamine amide mark.

As to expression, expressed by the skin glands.

Its subcellular location is the secreted. The polypeptide is Melittin-related peptide FQ-22-1 (Rana arvalis (Moor frog)).